The following is a 264-amino-acid chain: 5'-nucleotidase SurE (264 aa).

A divalent metal cation-binding residues include D10, D11, S43, and N99.

This sequence belongs to the SurE nucleotidase family. A divalent metal cation serves as cofactor.

The protein resides in the cytoplasm. The catalysed reaction is a ribonucleoside 5'-phosphate + H2O = a ribonucleoside + phosphate. Nucleotidase that shows phosphatase activity on nucleoside 5'-monophosphates. This Methanococcus vannielii (strain ATCC 35089 / DSM 1224 / JCM 13029 / OCM 148 / SB) protein is 5'-nucleotidase SurE.